Here is a 328-residue protein sequence, read N- to C-terminus: tRNA uridine(34) hydroxylase (328 aa).

Residues 130–224 (LDKDTVVLDT…YGKDPEVQGE (95 aa)) enclose the Rhodanese domain. The active-site Cysteine persulfide intermediate is the cysteine 184.

It belongs to the TrhO family.

The catalysed reaction is uridine(34) in tRNA + AH2 + O2 = 5-hydroxyuridine(34) in tRNA + A + H2O. In terms of biological role, catalyzes oxygen-dependent 5-hydroxyuridine (ho5U) modification at position 34 in tRNAs. In Streptococcus pneumoniae (strain Hungary19A-6), this protein is tRNA uridine(34) hydroxylase.